The primary structure comprises 219 residues: uncharacterized protein (219 aa).

This is an uncharacterized protein from Treponema pallidum (strain Nichols).